We begin with the raw amino-acid sequence, 588 residues long: Aspartate--tRNA ligase (588 aa).

Glutamate 174 is an L-aspartate binding site. Positions 198-201 (QLFK) are aspartate. Position 220 (arginine 220) interacts with L-aspartate. ATP-binding positions include 220–222 (RDE) and glutamine 229. Histidine 448 is an L-aspartate binding site. Glutamate 482 contributes to the ATP binding site. Arginine 489 lines the L-aspartate pocket. 534-537 (GIDR) contacts ATP.

It belongs to the class-II aminoacyl-tRNA synthetase family. Type 1 subfamily. As to quaternary structure, homodimer.

Its subcellular location is the cytoplasm. It carries out the reaction tRNA(Asp) + L-aspartate + ATP = L-aspartyl-tRNA(Asp) + AMP + diphosphate. In terms of biological role, catalyzes the attachment of L-aspartate to tRNA(Asp) in a two-step reaction: L-aspartate is first activated by ATP to form Asp-AMP and then transferred to the acceptor end of tRNA(Asp). The polypeptide is Aspartate--tRNA ligase (Xanthomonas campestris pv. campestris (strain B100)).